Reading from the N-terminus, the 500-residue chain is Alpha-L-arabinofuranosidase (500 aa).

Residues 1–21 form the signal peptide; it reads MLSNARIIAAGCIAAGSLVAA. Residue N467 is glycosylated (N-linked (GlcNAc...) asparagine).

Belongs to the glycosyl hydrolase 54 family.

It carries out the reaction Hydrolysis of terminal non-reducing alpha-L-arabinofuranoside residues in alpha-L-arabinosides.. It functions in the pathway glycan metabolism; L-arabinan degradation. The sequence is that of Alpha-L-arabinofuranosidase (abf1) from Hypocrea jecorina (Trichoderma reesei).